Reading from the N-terminus, the 336-residue chain is Tetraacyldisaccharide 4'-kinase (336 aa).

60–67 contributes to the ATP binding site; that stretch reads TVGGTGKT.

This sequence belongs to the LpxK family.

It catalyses the reaction a lipid A disaccharide + ATP = a lipid IVA + ADP + H(+). It functions in the pathway glycolipid biosynthesis; lipid IV(A) biosynthesis; lipid IV(A) from (3R)-3-hydroxytetradecanoyl-[acyl-carrier-protein] and UDP-N-acetyl-alpha-D-glucosamine: step 6/6. Transfers the gamma-phosphate of ATP to the 4'-position of a tetraacyldisaccharide 1-phosphate intermediate (termed DS-1-P) to form tetraacyldisaccharide 1,4'-bis-phosphate (lipid IVA). The chain is Tetraacyldisaccharide 4'-kinase from Pseudomonas fluorescens (strain SBW25).